Reading from the N-terminus, the 183-residue chain is Protein Syd (183 aa).

It belongs to the Syd family.

Its subcellular location is the cell inner membrane. Its function is as follows. Interacts with the SecY protein in vivo. May bind preferentially to an uncomplexed state of SecY, thus functioning either as a chelating agent for excess SecY in the cell or as a regulatory factor that negatively controls the translocase function. The sequence is that of Protein Syd from Idiomarina loihiensis (strain ATCC BAA-735 / DSM 15497 / L2-TR).